Reading from the N-terminus, the 507-residue chain is Cytochrome P450 monooxygenase helB2 (507 aa).

The first 22 residues, 1–22, serve as a signal peptide directing secretion; the sequence is MALPIILCLAVILWTSWRLLDA. Cys436 is a heme binding site.

The protein belongs to the cytochrome P450 family. The cofactor is heme.

It participates in mycotoxin biosynthesis. Cytochrome P450 monooxygenase; part of the gene cluster that mediates the biosynthesis of helvolic acid, an antibacterial nortriterpenoid. Protostadienol synthase helA cyclizes (3S)-oxidosqualene to (17Z)-protosta-17(20),24-dien-3-beta-ol (protostadienol). The synthesis of protostadienol is followed by several steps of monooxygenation, dehydrogenation, and acyl transfer to yield the final helvolic acid. Following the cyclization to the tetracyclic protostadienol by helA, cytochrome P450 monooxygenases helB1-mediated and helB2-mediated oxidation at C-4 and C-16, acyltransferase helD2-dependent acetylation of 16-OH, oxidation of C-21 by cytochrome P450 monooxygenase helB4, and short chain dehydrogenase helC-dependent oxidative decarboxylation yield the fusidane skeleton. This intermediate is further modified in three additional steps mediated by the cytochrome P450 monooxygenase helB3, the acyltransferase helD1, and the 3-ketosteroid 1-dehydrogenase helE to give helvolic acid. Compared with the late stages in the biosynthesis of helvolic acid, enzymes involved in the early stage modifications act in a relatively strict order. The hydroxylation of C-16 by helB1 and subsequent acetylation by helD2 should occur before the helB3-mediated oxidation of C-21. C-4 demethylation in fusidane-type antibiotics proceeds in an unusual manner though it is also achieved by oxidative decarboxylation. The methyl group at C-4 beta position is oxidized by helB1 and subsequently removed by the short chain dehydrogenase helC. The chain is Cytochrome P450 monooxygenase helB2 from Aspergillus fumigatus (strain ATCC MYA-4609 / CBS 101355 / FGSC A1100 / Af293) (Neosartorya fumigata).